The sequence spans 837 residues: Neural cell adhesion molecule 2 (837 aa).

The first 19 residues, Met-1–Ala-19, serve as a signal peptide directing secretion. Over Leu-20–Asn-697 the chain is Extracellular. 5 consecutive Ig-like C2-type domains span residues Leu-21 to Val-108, Gln-113 to Ile-202, Pro-208 to Gln-297, Pro-302 to Asp-396, and Pro-401 to Ala-491. 2 disulfides stabilise this stretch: Cys-42/Cys-93 and Cys-136/Cys-186. 2 N-linked (GlcNAc...) asparagine glycosylation sites follow: Asn-177 and Asn-219. Cys-232 and Cys-281 are joined by a disulfide. N-linked (GlcNAc...) asparagine glycosylation is present at Asn-309. A disulfide bridge links Cys-322 with Cys-380. N-linked (GlcNAc...) asparagine glycans are attached at residues Asn-406, Asn-419, Asn-445, Asn-474, and Asn-562. A disulfide bridge links Cys-422 with Cys-475. Fibronectin type-III domains are found at residues Ser-498–Val-591 and Glu-593–Pro-688. A helical membrane pass occupies residues Gly-698–Val-718. The Cytoplasmic portion of the chain corresponds to Thr-719 to Ala-837. Basic and acidic residues predominate over residues Gly-764–Gly-785. Residues Gly-764 to Thr-818 form a disordered region. Ser-765 carries the post-translational modification Phosphoserine. Position 780 is a phosphothreonine (Thr-780). Position 786 is a phosphoserine (Ser-786). The segment covering Asn-789–Thr-798 has biased composition (low complexity). The span at Glu-799–Leu-814 shows a compositional bias: basic and acidic residues.

Expressed most strongly in adult and fetal brain.

Its subcellular location is the cell membrane. Its function is as follows. May play important roles in selective fasciculation and zone-to-zone projection of the primary olfactory axons. The polypeptide is Neural cell adhesion molecule 2 (NCAM2) (Homo sapiens (Human)).